A 385-amino-acid polypeptide reads, in one-letter code: tRNA-specific 2-thiouridylase MnmA (385 aa).

Residues 27–34 (AMSGGVDS) and L53 each bind ATP. The Nucleophile role is filled by C121. C121 and C217 form a disulfide bridge. G145 contributes to the ATP binding site. An interaction with tRNA region spans residues 167-169 (KDQ). Residue C217 is the Cysteine persulfide intermediate of the active site.

This sequence belongs to the MnmA/TRMU family.

It localises to the cytoplasm. It carries out the reaction S-sulfanyl-L-cysteinyl-[protein] + uridine(34) in tRNA + AH2 + ATP = 2-thiouridine(34) in tRNA + L-cysteinyl-[protein] + A + AMP + diphosphate + H(+). Catalyzes the 2-thiolation of uridine at the wobble position (U34) of tRNA, leading to the formation of s(2)U34. In Sorangium cellulosum (strain So ce56) (Polyangium cellulosum (strain So ce56)), this protein is tRNA-specific 2-thiouridylase MnmA.